The following is a 144-amino-acid chain: Phospholipase A2, membrane associated (144 aa).

A signal peptide spans 1-20 (MKTLLLLAVIMAIGLLQVHG). 7 disulfides stabilise this stretch: cysteine 46-cysteine 137, cysteine 48-cysteine 64, cysteine 63-cysteine 117, cysteine 69-cysteine 144, cysteine 70-cysteine 110, cysteine 79-cysteine 103, and cysteine 97-cysteine 108. Ca(2+) is bound by residues tyrosine 47, glycine 49, and serine 51. Histidine 67 is a catalytic residue. Aspartate 68 provides a ligand contact to Ca(2+). Aspartate 111 is a catalytic residue.

The protein belongs to the phospholipase A2 family. It depends on Ca(2+) as a cofactor.

The protein localises to the secreted. Its subcellular location is the cell membrane. The protein resides in the mitochondrion outer membrane. It catalyses the reaction a 1,2-diacyl-sn-glycero-3-phosphoethanolamine + H2O = a 1-acyl-sn-glycero-3-phosphoethanolamine + a fatty acid + H(+). The enzyme catalyses 1-hexadecanoyl-2-(9Z-octadecenoyl)-sn-glycero-3-phosphoethanolamine + H2O = 1-hexadecanoyl-sn-glycero-3-phosphoethanolamine + (9Z)-octadecenoate + H(+). The catalysed reaction is 1-hexadecanoyl-2-(9Z,12Z-octadecadienoyl)-sn-glycero-3-phosphoethanolamine + H2O = 1-hexadecanoyl-sn-glycero-3-phosphoethanolamine + (9Z,12Z)-octadecadienoate + H(+). It carries out the reaction 1-hexadecanoyl-2-(5Z,8Z,11Z,14Z-eicosatetraenoyl)-sn-glycero-3-phosphoethanolamine + H2O = 1-hexadecanoyl-sn-glycero-3-phosphoethanolamine + (5Z,8Z,11Z,14Z)-eicosatetraenoate + H(+). It catalyses the reaction N-hexadecanoyl-1,2-di-(9Z-octadecenoyl)-sn-glycero-3-phosphoethanolamine + H2O = N-hexadecanoyl-1-(9Z-octadecenoyl)-sn-glycero-3-phosphoethanolamine + (9Z)-octadecenoate + H(+). The enzyme catalyses 1,2-dihexadecanoyl-sn-glycero-3-phospho-(1'-sn-glycerol) + H2O = 1-hexadecanoyl-sn-glycero-3-phospho-(1'-sn-glycerol) + hexadecanoate + H(+). The catalysed reaction is 1-hexadecanoyl-2-(9Z-octadecenoyl)-sn-glycero-3-phosphoglycerol + H2O = 1-hexadecanoyl-sn-glycero-3-phosphoglycerol + (9Z)-octadecenoate + H(+). It carries out the reaction 1-hexadecanoyl-2-(9Z-octadecenoyl)-sn-glycero-3-phospho-(1'-sn-glycerol) + H2O = 1-hexadecanoyl-sn-glycero-3-phospho-(1'-sn-glycerol) + (9Z)-octadecenoate + H(+). It catalyses the reaction a 1,2-diacyl-sn-glycero-3-phosphocholine + H2O = a 1-acyl-sn-glycero-3-phosphocholine + a fatty acid + H(+). The enzyme catalyses 1,2-dihexadecanoyl-sn-glycero-3-phosphocholine + H2O = 1-hexadecanoyl-sn-glycero-3-phosphocholine + hexadecanoate + H(+). The catalysed reaction is 1-hexadecanoyl-2-(9Z-octadecenoyl)-sn-glycero-3-phosphocholine + H2O = 1-hexadecanoyl-sn-glycero-3-phosphocholine + (9Z)-octadecenoate + H(+). It carries out the reaction 1-hexadecanoyl-2-(9Z,12Z-octadecadienoyl)-sn-glycero-3-phosphocholine + H2O = (9Z,12Z)-octadecadienoate + 1-hexadecanoyl-sn-glycero-3-phosphocholine + H(+). It catalyses the reaction 1-hexadecanoyl-2-(4Z,7Z,10Z,13Z,16Z,19Z-docosahexaenoyl)-sn-glycero-3-phosphocholine + H2O = (4Z,7Z,10Z,13Z,16Z,19Z)-docosahexaenoate + 1-hexadecanoyl-sn-glycero-3-phosphocholine + H(+). In terms of biological role, secretory calcium-dependent phospholipase A2 that primarily targets extracellular phospholipids with implications in host antimicrobial defense, inflammatory response and tissue regeneration. Hydrolyzes the ester bond of the fatty acyl group attached at sn-2 position of phospholipids (phospholipase A2 activity) with preference for phosphatidylethanolamines and phosphatidylglycerols over phosphatidylcholines. Contributes to lipid remodeling of cellular membranes and generation of lipid mediators involved in pathogen clearance. Displays bactericidal activity against Gram-positive bacteria by directly hydrolyzing phospholipids of the bacterial membrane. Upon sterile inflammation, targets membrane phospholipids of extracellular mitochondria released from activated platelets, generating free unsaturated fatty acids such as arachidonate that is used by neighboring leukocytes to synthesize inflammatory eicosanoids such as leukotrienes. Simultaneously, by compromising mitochondrial membrane integrity, promotes the release in circulation of potent damage-associated molecular pattern molecules that activate the innate immune response. Plays a stem cell regulator role in the intestinal crypt. Within intracellular compartment mediates Paneth cell differentiation and its stem cell supporting functions by inhibiting Wnt signaling pathway in intestinal stem cell (ICS). Secreted in the intestinal lumen upon inflammation, acts in an autocrine way and promotes prostaglandin E2 synthesis that stimulates Wnt signaling pathway in ICS cells and tissue regeneration. May play a role in the biosynthesis of N-acyl ethanolamines that regulate energy metabolism and inflammation. Hydrolyzes N-acyl phosphatidylethanolamines to N-acyl lysophosphatidylethanolamines, which are further cleaved by a lysophospholipase D to release N-acyl ethanolamines. Independent of its catalytic activity, acts as a ligand for integrins. Binds to and activates integrins ITGAV:ITGB3, ITGA4:ITGB1 and ITGA5:ITGB1. Binds to a site (site 2) which is distinct from the classical ligand-binding site (site 1) and induces integrin conformational changes and enhanced ligand binding to site 1. Induces cell proliferation in an integrin-dependent manner. In Bos taurus (Bovine), this protein is Phospholipase A2, membrane associated (PLA2G2A).